The chain runs to 215 residues: uncharacterized protein (215 aa).

This is an uncharacterized protein from Saccharomyces cerevisiae (strain ATCC 204508 / S288c) (Baker's yeast).